A 29-amino-acid chain; its full sequence is MRSFDQGSTRAPARERCRRQRPEGRSAQR.

Residues 1-29 (MRSFDQGSTRAPARERCRRQRPEGRSAQR) are disordered. Over residues 12–29 (PARERCRRQRPEGRSAQR) the composition is skewed to basic and acidic residues.

The chain is Protamine-like protein (tpr) from Escherichia coli (strain K12).